The sequence spans 310 residues: Fructose-bisphosphate aldolase/6-deoxy-5-ketofructose 1-phosphate synthase (310 aa).

Substrate contacts are provided by residues 48 to 49, His53, Asp57, and Trp180; that span reads DQ. Catalysis depends on Tyr182, which acts as the Proton donor. Substrate is bound by residues Arg184, 213–215, 241–243, and 270–271; these read KVN, AGG, and GR. The active-site Schiff-base intermediate with dihydroxyacetone-P is Lys213. Lys213 serves as the catalytic Schiff-base intermediate with substrate.

The protein belongs to the DeoC/FbaB aldolase family.

The catalysed reaction is beta-D-fructose 1,6-bisphosphate = D-glyceraldehyde 3-phosphate + dihydroxyacetone phosphate. It catalyses the reaction beta-D-fructose 1,6-bisphosphate + methylglyoxal = 1-deoxy-D-threo-hexo-2,5-diulose 6-phosphate + D-glyceraldehyde 3-phosphate. It carries out the reaction beta-D-fructose 1-phosphate + methylglyoxal = 1-deoxy-D-threo-hexo-2,5-diulose 6-phosphate + D-glyceraldehyde. It functions in the pathway aromatic compound metabolism. Catalyzes the transaldolization of either fructose-1-P or fructose-1,6-bisphosphate with methylglyoxal to produce 6-deoxy-5-ketofructose-1-phosphate (DKFP). Also catalyzes the reversible aldol condensation of dihydroxyacetone phosphate (DHAP or glycerone-phosphate) with glyceraldehyde 3-phosphate (G3P or GAP) to produce fructose 1,6-bisphosphate (FBP). This is Fructose-bisphosphate aldolase/6-deoxy-5-ketofructose 1-phosphate synthase from Methanocaldococcus jannaschii (strain ATCC 43067 / DSM 2661 / JAL-1 / JCM 10045 / NBRC 100440) (Methanococcus jannaschii).